Here is a 277-residue protein sequence, read N- to C-terminus: tRNA pseudouridine synthase B (277 aa).

Aspartate 38 functions as the Nucleophile in the catalytic mechanism.

This sequence belongs to the pseudouridine synthase TruB family. Type 1 subfamily.

The enzyme catalyses uridine(55) in tRNA = pseudouridine(55) in tRNA. Responsible for synthesis of pseudouridine from uracil-55 in the psi GC loop of transfer RNAs. This Sulfurovum sp. (strain NBC37-1) protein is tRNA pseudouridine synthase B.